We begin with the raw amino-acid sequence, 384 residues long: MKRSHISSPRSYSRPAISIFGVFLLFLLVLTLSSRKPSDSSSGLAPNRNLATKSTIPRFAYLVTGTKGDGKRVKRLLKAIHHPRNYYLLHLDLEASDEERMELAKYVRSEKKKFENVMVMGLADLVTEKGPTMLASTLHGVAILLKKAKDWDWFINLSASDYPLMPQDDILHIFSYLPRYLNFIEHTSNIGWKENQRARPIIIDPGFYHLKKSGVFWAKERRSLPASFKLFMGSTSVALTRPFLEFCIWGWDNLPRTLLMYYTNFLLSSEGYFQTVVCNNKDYQNTTVNHDLHYTKWDPLQQRTLNVTVENFRDMVQSGAPFAREFREDDLVLDKIDIELLGQTDTGLELKTPDVVKPTVSWKRLEKLMVRLLDHENFRAKQCK.

Topologically, residues 1–11 (MKRSHISSPRS) are cytoplasmic. The signal-anchor for type II membrane protein transmembrane segment at 12 to 34 (YSRPAISIFGVFLLFLLVLTLSS) threads the bilayer. At 35–384 (RKPSDSSSGL…HENFRAKQCK (350 aa)) the chain is on the lumenal side. N-linked (GlcNAc...) asparagine glycosylation is found at N156, N285, and N306.

Belongs to the glycosyltransferase 14 family.

The protein resides in the golgi apparatus membrane. In terms of biological role, beta-glucuronosyltransferase involved in the biosynthesis of type II arabinogalactan (AG). Modifies both the beta-1,6-linked galactan and beta-1,3-linked galactan present in type II AG. This is Beta-glucuronosyltransferase GlcAT14C from Arabidopsis thaliana (Mouse-ear cress).